Here is a 280-residue protein sequence, read N- to C-terminus: ESX-1 secretion-associated protein EspJ (280 aa).

Phosphoserine is present on serine 70. Composition is skewed to low complexity over residues 167-181 and 246-280; these read QTISQTAQQAAQSAQ and PAQAMDTGAGARPAASPLAAPVDPSTPAPSTTTTL. Residues 167–280 form a disordered region; it reads QTISQTAQQA…TPAPSTTTTL (114 aa).

In terms of assembly, residues 76-280 interact with EsxB and an artificial EsxB-EsxA heterodimer. In terms of processing, phosphorylated at Ser-70.

It is found in the secreted. Its function is as follows. Could be involved in regulation of growth and intracellular survival. This Mycobacterium tuberculosis (strain ATCC 25618 / H37Rv) protein is ESX-1 secretion-associated protein EspJ.